A 426-amino-acid polypeptide reads, in one-letter code: Bile acid CoA-transferase BaiF (426 aa).

The Nucleophile role is filled by aspartate 168.

It belongs to the CoA-transferase III family.

The enzyme catalyses lithocholoyl-CoA + cholate = choloyl-CoA + lithocholate. It catalyses the reaction deoxycholoyl-CoA + cholate = choloyl-CoA + deoxycholate. The catalysed reaction is allodeoxycholoyl-CoA + cholate = allodeoxycholate + choloyl-CoA. It carries out the reaction allocholate + deoxycholoyl-CoA = allocholoyl-CoA + deoxycholate. The enzyme catalyses allocholate + lithocholoyl-CoA = allocholoyl-CoA + lithocholate. It catalyses the reaction allocholate + allodeoxycholoyl-CoA = allocholoyl-CoA + allodeoxycholate. The catalysed reaction is lithocholoyl-CoA + chenodeoxycholate = chenodeoxycholoyl-CoA + lithocholate. It carries out the reaction ursodeoxycholate + deoxycholoyl-CoA = ursodeoxycholoyl-CoA + deoxycholate. The enzyme catalyses ursodeoxycholate + lithocholoyl-CoA = ursodeoxycholoyl-CoA + lithocholate. It catalyses the reaction allodeoxycholoyl-CoA + ursodeoxycholate = ursodeoxycholoyl-CoA + allodeoxycholate. The catalysed reaction is beta-muricholate + lithocholoyl-CoA = beta-muricholoyl-CoA + lithocholate. It carries out the reaction beta-muricholate + deoxycholoyl-CoA = beta-muricholoyl-CoA + deoxycholate. The enzyme catalyses beta-muricholate + allodeoxycholoyl-CoA = beta-muricholoyl-CoA + allodeoxycholate. It catalyses the reaction choloyl-CoA + H2O = cholate + CoA + H(+). The catalysed reaction is chenodeoxycholoyl-CoA + H2O = chenodeoxycholate + CoA + H(+). It participates in lipid metabolism; bile acid biosynthesis. In terms of biological role, functions in the bile acid 7alpha-dehydroxylation pathway, which forms secondary bile acids via the 7alpha-dehydroxylation of primary bile acids, and is carried out by intestinal anaerobic bacteria. Acts as a bile acid CoA transferase with broad bile acid substrate specificity. Catalyzes the transfer of the CoA moiety of secondary bile acid-CoA compounds to primary bile acids. Can use lithocholoyl-CoA, deoxycholoyl-CoA and allodeoxycholoyl-CoA as bile acid CoA donors and cholate, allocholate, chenodeoxycholate, ursodeoxycholate, and beta-muricholate as bile acid CoA acceptors. Also displays CoA hydrolase activity, being able to catalyze the hydrolysis of choloyl-CoA, 3-dehydrocholoyl-CoA, and chenodeoxycholoyl-CoA, releasing CoA and the corresponding free bile acid. However, this latter activity may not represent the actual activity of this enzyme, since using a transferase rather than hydrolase, the bacteria conserve the thioester bond energy, saving ATP molecules. Shows no hydrolytic activity with acetyl-CoA, isovaleryl-CoA, palmitoyl-CoA, or phenylacetyl-CoA as substrates. The protein is Bile acid CoA-transferase BaiF of Clostridium scindens (strain JCM 10418 / VPI 12708).